Reading from the N-terminus, the 314-residue chain is Aspartate carbamoyltransferase catalytic subunit (314 aa).

Carbamoyl phosphate is bound by residues Arg-55 and Thr-56. Lys-83 serves as a coordination point for L-aspartate. Positions 105, 134, and 137 each coordinate carbamoyl phosphate. Residues Arg-167 and Arg-221 each contribute to the L-aspartate site. 2 residues coordinate carbamoyl phosphate: Gly-262 and Pro-263.

Belongs to the aspartate/ornithine carbamoyltransferase superfamily. ATCase family. In terms of assembly, heterododecamer (2C3:3R2) of six catalytic PyrB chains organized as two trimers (C3), and six regulatory PyrI chains organized as three dimers (R2).

The catalysed reaction is carbamoyl phosphate + L-aspartate = N-carbamoyl-L-aspartate + phosphate + H(+). The protein operates within pyrimidine metabolism; UMP biosynthesis via de novo pathway; (S)-dihydroorotate from bicarbonate: step 2/3. Functionally, catalyzes the condensation of carbamoyl phosphate and aspartate to form carbamoyl aspartate and inorganic phosphate, the committed step in the de novo pyrimidine nucleotide biosynthesis pathway. The polypeptide is Aspartate carbamoyltransferase catalytic subunit (Corynebacterium urealyticum (strain ATCC 43042 / DSM 7109)).